Reading from the N-terminus, the 151-residue chain is Mini-ribonuclease 3 (151 aa).

Asp-30 is a catalytic residue.

It belongs to the MrnC RNase family. Homodimer. Mg(2+) serves as cofactor.

Its subcellular location is the cytoplasm. Its function is as follows. Involved in correct processing of both the 5' and 3' ends of 23S rRNA precursor. Processes 30S rRNA precursor transcript even in absence of ribonuclease 3 (Rnc); Rnc processes 30S rRNA into smaller rRNA precursors. The polypeptide is Mini-ribonuclease 3 (Thermosynechococcus vestitus (strain NIES-2133 / IAM M-273 / BP-1)).